We begin with the raw amino-acid sequence, 463 residues long: Argininosuccinate lyase (463 aa).

This sequence belongs to the lyase 1 family. Argininosuccinate lyase subfamily.

It is found in the cytoplasm. It catalyses the reaction 2-(N(omega)-L-arginino)succinate = fumarate + L-arginine. The protein operates within amino-acid biosynthesis; L-arginine biosynthesis; L-arginine from L-ornithine and carbamoyl phosphate: step 3/3. This is Argininosuccinate lyase from Staphylococcus epidermidis (strain ATCC 35984 / DSM 28319 / BCRC 17069 / CCUG 31568 / BM 3577 / RP62A).